The sequence spans 3416 residues: Genome polyprotein (3416 aa).

The disordered stretch occupies residues 1–34 (MAKGAVLKGKGGGPPRRVPKETAKKTRQGPGRLP). Over 1–99 (MAKGAVLKGK…NRRRGKRRST (99 aa)) the chain is Cytoplasmic. Positions 97 to 117 (RSTTGLLTSILLACLATLVIS) are cleaved as a propeptide — ER anchor for the capsid protein C, removed in mature form by serine protease NS3. A helical transmembrane segment spans residues 100–120 (TGLLTSILLACLATLVISATI). The Extracellular segment spans residues 121-243 (RRERTGDMVI…HLTRVEGWVW (123 aa)). The N-linked (GlcNAc...) asparagine; by host glycan is linked to asparagine 145. Residues 244-261 (KNKLLTMAFCAVVWMVTD) traverse the membrane as a helical segment. Position 262 (serine 262) is a topological domain, cytoplasmic. A helical membrane pass occupies residues 263 to 281 (LPTRFIVITVALCLAPTYA). The Extracellular segment spans residues 282-728 (TRCTHLQNRD…HTAFGAAFNT (447 aa)). 6 disulfides stabilise this stretch: cysteine 284/cysteine 311, cysteine 341/cysteine 397, cysteine 341/cysteine 402, cysteine 355/cysteine 386, cysteine 373/cysteine 397, and cysteine 373/cysteine 402. A fusion peptide region spans residues 379 to 392 (DRGWGNHCGLFGKG). The N-linked (GlcNAc...) asparagine; by host glycan is linked to asparagine 435. Intrachain disulfides connect cysteine 467–cysteine 571 and cysteine 588–cysteine 619. Residues 729–749 (IFGGVGFLPRILLGVALAWLG) traverse the membrane as a helical segment. Topologically, residues 750-756 (LNSRNPT) are cytoplasmic. A helical transmembrane segment spans residues 757–777 (LSVGFLITGGLVLTMTLGVGA). Residues 778–1134 (DMGCAIDANR…RSMVLADNGA (357 aa)) are Extracellular-facing. Disulfide bonds link cysteine 781/cysteine 792, cysteine 832/cysteine 922, cysteine 957/cysteine 1002, cysteine 1059/cysteine 1108, cysteine 1070/cysteine 1092, and cysteine 1091/cysteine 1095. N-linked (GlcNAc...) asparagine; by host glycosylation is found at asparagine 862, asparagine 985, and asparagine 1001. The helical transmembrane segment at 1135–1155 (MLSEGGVPGIVAVFVVLELVI) threads the bilayer. Over 1156 to 1162 (RRRPTTG) the chain is Cytoplasmic. A helical transmembrane segment spans residues 1163 to 1183 (TSVVWCGVVVLGLVVTGLVTI). Residues 1184–1189 (EGLCRY) lie on the Lumenal side of the membrane. A helical membrane pass occupies residues 1190-1210 (VVAVGILMSMELGPEIVALVL). Residues 1211–1235 (LQAVFDMRTGLLVAFAVKRAYTTRE) are Cytoplasmic-facing. The helical transmembrane segment at 1236-1256 (AVVTYFLLLVLELGFPEASLS) threads the bilayer. Residues 1257-1295 (NIWKWADSLAMGTLILQACSQEGRARVGYLLAAMMTQKD) are Lumenal-facing. The helical transmembrane segment at 1296-1316 (MAIIHTGLTIFLSAATAMAVW) threads the bilayer. Residues 1317-1361 (SMIKGQRDQKGLSWATPLVGLFGGEGVGLRLLAFRRLAERRNRRS) are Cytoplasmic-facing. The helical transmembrane segment at 1362-1379 (FSEPLTVVGVMLTVASGM) threads the bilayer. Residues 1380–1384 (VRHTS) are Lumenal-facing. Residues 1385–1405 (QEALCALVAGAFLLLMMVLGT) form a helical membrane-spanning segment. Topologically, residues 1406–1458 (RKMQLIAEWCGEVEWNPDLVNEGGEVNLKVRQDAMGNLHLTEVEKEERAMALW) are cytoplasmic. Residues 1412–1451 (AEWCGEVEWNPDLVNEGGEVNLKVRQDAMGNLHLTEVEKE) are interacts with and activates NS3 protease. An intramembrane region (helical) is located at residues 1459–1479 (LLAGLVASAFHWAGILIVLAI). Residues 1480-2162 (WTFFEMLSSG…RMAERDAPEA (683 aa)) are Cytoplasmic-facing. Positions 1492-1671 (SELVFSGQGT…EAEKSRPELP (180 aa)) constitute a Peptidase S7 domain. Catalysis depends on charge relay system; for serine protease NS3 activity residues histidine 1545, aspartate 1569, and serine 1629. The region spanning 1677 to 1833 (TGWMSKGQIT…ESNGAIMSEE (157 aa)) is the Helicase ATP-binding domain. 1690-1697 (MHPGSGKT) contacts ATP. The DEAH box motif lies at 1781-1784 (DEAH). In terms of domain architecture, Helicase C-terminal spans 1844–2002 (GFDWITEYEG…TLRGPVATFY (159 aa)). Lysine 1885 carries the N6-acetyllysine; by host modification. The chain crosses the membrane as a helical span at residues 2163–2183 (FLTIVEVAVLGVATLGILWCF). Residues 2184 to 2191 (VARTSVSR) lie on the Lumenal side of the membrane. The helical intramembrane region spans 2192–2211 (MFLGTVVLFAALLLLWIGGV). Aspartate 2212 is a topological domain (lumenal). Residues 2213 to 2233 (YGYMAGIALIFYIFLTVLQPE) form a helical membrane-spanning segment. Residues 2234 to 2246 (PGKQRSSDDNRLA) lie on the Cytoplasmic side of the membrane. The helical transmembrane segment at 2247-2267 (YFLLGLLSLAGLVTANEMGML) threads the bilayer. The Lumenal portion of the chain corresponds to 2268–2301 (DKTKADLAGLMWHGEQRHPAWEEWTNVDIQPARS). Positions 2302 to 2322 (WGTYVLIVSLFTPYMLHQLQT) form an intramembrane region, helical. At 2323-2345 (KIQQLVNSSVASGAQAMRDLGGG) the chain is on the lumenal side. Positions 2346 to 2366 (TPFFGVAGHVIALGVTSLVGA) form an intramembrane region, helical. The Lumenal segment spans residues 2367-2368 (TP). Residues 2369–2389 (LSLGLGVALAAFHLAIVASGL) traverse the membrane as a helical segment. Residues 2390-2432 (EAELTQRAHRVFFSAMVKNPMVDGDVINPFPDGEPKPVLYERR) are Cytoplasmic-facing. Residues 2433–2453 (MSLILAIALCMVSVVLNRTAA) form a helical membrane-spanning segment. Residues 2454 to 2476 (SMTEAGAVGLAALGQLVHPETET) are Lumenal-facing. Residues 2477-2497 (LWTMPMACGMAGLVRGSFWGL) form a helical membrane-spanning segment. The Cytoplasmic portion of the chain corresponds to 2498-3416 (LPMGHRLWLK…WDLKLESNII (919 aa)). The region spanning 2514 to 2778 (GGADGETLGD…EVDLGTGTRC (265 aa)) is the mRNA cap 0-1 NS5-type MT domain. Serine 2569 contacts S-adenosyl-L-methionine. Serine 2569 bears the Phosphoserine mark. Lysine 2574 serves as the catalytic For 2'-O-MTase activity. S-adenosyl-L-methionine-binding residues include glycine 2599, tryptophan 2600, threonine 2617, isoleucine 2618, aspartate 2644, and valine 2645. Aspartate 2659 functions as the For 2'-O-MTase activity in the catalytic mechanism. Isoleucine 2660 contacts S-adenosyl-L-methionine. Catalysis depends on for 2'-O-MTase activity residues lysine 2696 and glutamate 2732. Residues 2732 to 2736 (EMYFS) are interaction with host SCRIB. S-adenosyl-L-methionine is bound at residue tyrosine 2734. The Zn(2+) site is built by glutamate 2952, histidine 2956, cysteine 2961, and cysteine 2964. The 150-residue stretch at 3042–3191 (GLFYADDTAG…RPIDDRFGKA (150 aa)) folds into the RdRp catalytic domain. 3 residues coordinate Zn(2+): histidine 3226, cysteine 3242, and cysteine 3361.

The protein in the N-terminal section; belongs to the class I-like SAM-binding methyltransferase superfamily. mRNA cap 0-1 NS5-type methyltransferase family. Homodimer. Interacts (via N-terminus) with host EXOC1 (via C-terminus); this interaction results in EXOC1 degradation through the proteasome degradation pathway. As to quaternary structure, forms heterodimers with envelope protein E in the endoplasmic reticulum and Golgi. In terms of assembly, homodimer; in the endoplasmic reticulum and Golgi. Interacts with protein prM. Interacts with non-structural protein 1. Homodimer; Homohexamer when secreted. Interacts with envelope protein E. As to quaternary structure, interacts (via N-terminus) with serine protease NS3. In terms of assembly, forms a heterodimer with serine protease NS3. May form homooligomers. Forms a heterodimer with NS2B. Interacts with NS4B. Interacts with unphosphorylated RNA-directed RNA polymerase NS5; this interaction stimulates RNA-directed RNA polymerase NS5 guanylyltransferase activity. As to quaternary structure, interacts with serine protease NS3. In terms of assembly, homodimer. Interacts with host STAT2; this interaction inhibits the phosphorylation of the latter, and, when all viral proteins are present (polyprotein), targets STAT2 for degradation. Interacts with serine protease NS3. Post-translationally, specific enzymatic cleavages in vivo yield mature proteins. Cleavages in the lumen of endoplasmic reticulum are performed by host signal peptidase, whereas cleavages in the cytoplasmic side are performed by serine protease NS3. Signal cleavage at the 2K-4B site requires a prior NS3 protease-mediated cleavage at the 4A-2K site. In terms of processing, cleaved in post-Golgi vesicles by a host furin, releasing the mature small envelope protein M, and peptide pr. This cleavage is incomplete as up to 30% of viral particles still carry uncleaved prM. N-glycosylated. Post-translationally, N-glycosylated. The excreted form is glycosylated and this is required for efficient secretion of the protein from infected cells. In terms of processing, acetylated by host KAT5. Acetylation modulates NS3 RNA-binding and unwinding activities and plays an important positive role for viral replication. Phosphorylated on serines residues. This phosphorylation may trigger NS5 nuclear localization.

The protein localises to the virion. It localises to the host nucleus. It is found in the host cytoplasm. The protein resides in the host perinuclear region. Its subcellular location is the secreted. The protein localises to the virion membrane. It localises to the host endoplasmic reticulum membrane. The catalysed reaction is Selective hydrolysis of -Xaa-Xaa-|-Yaa- bonds in which each of the Xaa can be either Arg or Lys and Yaa can be either Ser or Ala.. It catalyses the reaction RNA(n) + a ribonucleoside 5'-triphosphate = RNA(n+1) + diphosphate. The enzyme catalyses a ribonucleoside 5'-triphosphate + H2O = a ribonucleoside 5'-diphosphate + phosphate + H(+). It carries out the reaction ATP + H2O = ADP + phosphate + H(+). The catalysed reaction is a 5'-end (5'-triphosphoguanosine)-ribonucleoside in mRNA + S-adenosyl-L-methionine = a 5'-end (N(7)-methyl 5'-triphosphoguanosine)-ribonucleoside in mRNA + S-adenosyl-L-homocysteine. It catalyses the reaction a 5'-end (N(7)-methyl 5'-triphosphoguanosine)-ribonucleoside in mRNA + S-adenosyl-L-methionine = a 5'-end (N(7)-methyl 5'-triphosphoguanosine)-(2'-O-methyl-ribonucleoside) in mRNA + S-adenosyl-L-homocysteine + H(+). In terms of biological role, plays a role in virus budding by binding to the cell membrane and gathering the viral RNA into a nucleocapsid that forms the core of a mature virus particle. During virus entry, may induce genome penetration into the host cytoplasm after hemifusion induced by the surface proteins. Can migrate to the cell nucleus where it modulates host functions. Its function is as follows. Inhibits RNA silencing by interfering with host Dicer. Functionally, prevents premature fusion activity of envelope proteins in trans-Golgi by binding to envelope protein E at pH6.0. After virion release in extracellular space, gets dissociated from E dimers. Acts as a chaperone for envelope protein E during intracellular virion assembly by masking and inactivating envelope protein E fusion peptide. prM is the only viral peptide matured by host furin in the trans-Golgi network probably to avoid catastrophic activation of the viral fusion activity in acidic Golgi compartment prior to virion release. prM-E cleavage is inefficient, and many virions are only partially matured. These uncleaved prM would play a role in immune evasion. In terms of biological role, may play a role in virus budding. Exerts cytotoxic effects by activating a mitochondrial apoptotic pathway through M ectodomain. May display a viroporin activity. Its function is as follows. Binds to host cell surface receptor and mediates fusion between viral and cellular membranes. Envelope protein is synthesized in the endoplasmic reticulum in the form of heterodimer with protein prM. They play a role in virion budding in the ER, and the newly formed immature particle is covered with 60 spikes composed of heterodimer between precursor prM and envelope protein E. The virion is transported to the Golgi apparatus where the low pH causes dissociation of PrM-E heterodimers and formation of E homodimers. prM-E cleavage is inefficient, and many virions are only partially matured. These uncleaved prM would play a role in immune evasion. Functionally, involved in immune evasion, pathogenesis and viral replication. Once cleaved off the polyprotein, is targeted to three destinations: the viral replication cycle, the plasma membrane and the extracellular compartment. Essential for viral replication. Required for formation of the replication complex and recruitment of other non-structural proteins to the ER-derived membrane structures. Excreted as a hexameric lipoparticle that plays a role against host immune response. Antagonizing the complement function. Binds to the host macrophages and dendritic cells. Inhibits signal transduction originating from Toll-like receptor 3 (TLR3). Component of the viral RNA replication complex that functions in virion assembly and antagonizes the host immune response. In terms of biological role, required cofactor for the serine protease function of NS3. May have membrane-destabilizing activity and form viroporins. Its function is as follows. Displays three enzymatic activities: serine protease, NTPase and RNA helicase. NS3 serine protease, in association with NS2B, performs its autocleavage and cleaves the polyprotein at dibasic sites in the cytoplasm: C-prM, NS2A-NS2B, NS2B-NS3, NS3-NS4A, NS4A-2K and NS4B-NS5. NS3 RNA helicase binds RNA and unwinds dsRNA in the 3' to 5' direction. Functionally, regulates the ATPase activity of the NS3 helicase activity. NS4A allows NS3 helicase to conserve energy during unwinding. Functions as a signal peptide for NS4B and is required for the interferon antagonism activity of the latter. In terms of biological role, induces the formation of ER-derived membrane vesicles where the viral replication takes place. Inhibits interferon (IFN)-induced host STAT1 phosphorylation and nuclear translocation, thereby preventing the establishment of cellular antiviral state by blocking the IFN-alpha/beta pathway. Inhibits STAT2 translocation in the nucleus after IFN-alpha treatment. Its function is as follows. Replicates the viral (+) and (-) RNA genome, and performs the capping of genomes in the cytoplasm. NS5 methylates viral RNA cap at guanine N-7 and ribose 2'-O positions. Besides its role in RNA genome replication, also prevents the establishment of cellular antiviral state by blocking the interferon-alpha/beta (IFN-alpha/beta) signaling pathway. Inhibits host TYK2 and STAT2 phosphorylation, thereby preventing activation of JAK-STAT signaling pathway. The chain is Genome polyprotein from Homo sapiens (Human).